A 360-amino-acid chain; its full sequence is MVHGEAFSRPLSRNEVVGLIFRLTIFGAVTYFTIKWMVDAIDPTRKQKVEAQKQAEKLMRQIGVKNVKLTEYEMSIAAHLVDPLSMLVTWSDIAGLDDVITDLKDTVILPIRKRYLFENSRLLQPPKGVLLYGPPGCGKTMIAKATAKEAGCRFINLQPSTLTDKWYGESQKLAAAVFSLAVKLQPSIIFIDEIDSFLRSRSSSDHEATAMMKAQFMSLWDGLDTDFNCQVIVMGATNRPQDLDTAIMRRMPTRFHINQPSLKQREAILDLILRNESVDSHVDLMEIARGSDGFSGSDLKEMCRDAALLCVRDSVNNSSEESPCEEIRPIHQQDLLRAIDKMKRSKSATNQNVLMHVSLD.

Residues 1–15 (MVHGEAFSRPLSRNE) are Mitochondrial intermembrane-facing. A helical membrane pass occupies residues 16–34 (VVGLIFRLTIFGAVTYFTI). Over 35–360 (KWMVDAIDPT…QNVLMHVSLD (326 aa)) the chain is Cytoplasmic. 133 to 140 (GPPGCGKT) serves as a coordination point for ATP.

The protein belongs to the AAA ATPase family. MSP1 subfamily.

The protein resides in the mitochondrion outer membrane. The protein localises to the peroxisome membrane. Its subcellular location is the postsynaptic cell membrane. It carries out the reaction [protein]-with a C-terminal TM segment(out) + ATP + H2O = [protein]-with a C-terminal TM segment(in) + ADP + phosphate + H(+). In terms of biological role, outer mitochondrial translocase required to remove mislocalized tail-anchored transmembrane proteins on mitochondria. Specifically recognizes and binds tail-anchored transmembrane proteins: acts as a dislocase that mediates the ATP-dependent extraction of mistargeted tail-anchored transmembrane proteins from the mitochondrion outer membrane. Also plays a critical role in regulating the surface expression of AMPA receptors (AMPAR), thereby regulating synaptic plasticity and learning and memory. This Xenopus tropicalis (Western clawed frog) protein is Outer mitochondrial transmembrane helix translocase.